Here is a 793-residue protein sequence, read N- to C-terminus: Putative potassium transporter 12 (793 aa).

The Cytoplasmic segment spans residues methionine 1 to serine 54. Residues leucine 55–proline 75 traverse the membrane as a helical segment. Over histidine 76 to alanine 87 the chain is Extracellular. A helical transmembrane segment spans residues leucine 88 to leucine 108. Topologically, residues arginine 109–leucine 175 are cytoplasmic. Residues leucine 176 to isoleucine 196 form a helical membrane-spanning segment. Residues serine 197–aspartate 215 are Extracellular-facing. The helical transmembrane segment at valine 216 to threonine 236 threads the bilayer. Residues aspartate 237–lysine 238 are Cytoplasmic-facing. A helical transmembrane segment spans residues valine 239–alanine 259. Topologically, residues leucine 260–serine 289 are extracellular. Asparagine 266 carries N-linked (GlcNAc...) asparagine glycosylation. The helical transmembrane segment at tryptophan 290–leucine 310 threads the bilayer. At cysteine 311 to valine 315 the chain is on the cytoplasmic side. The helical transmembrane segment at leucine 316–alanine 338 threads the bilayer. The Extracellular portion of the chain corresponds to alanine 339 to threonine 359. The chain crosses the membrane as a helical span at residues isoleucine 360–isoleucine 380. The Cytoplasmic segment spans residues serine 381–glutamine 411. Residues isoleucine 412–phenylalanine 432 form a helical membrane-spanning segment. The Extracellular segment spans residues lysine 433–threonine 444. The N-linked (GlcNAc...) asparagine glycan is linked to asparagine 434. A helical membrane pass occupies residues alanine 445–tryptophan 465. Residues lysine 466 to histidine 468 are Cytoplasmic-facing. Residues tryptophan 469–alanine 489 traverse the membrane as a helical segment. Residues cysteine 490–glutamine 496 lie on the Extracellular side of the membrane. A helical membrane pass occupies residues glycine 497 to phenylalanine 517. Topologically, residues cysteine 518–isoleucine 793 are cytoplasmic.

It belongs to the HAK/KUP transporter (TC 2.A.72.3) family.

The protein resides in the membrane. Functionally, high-affinity potassium transporter. This chain is Putative potassium transporter 12 (HAK12), found in Oryza sativa subsp. japonica (Rice).